The chain runs to 560 residues: MAGYGRGFFGLFGGGGLVNAKVDTDKLAQKQDERLLTKATVVALDDAQDGSIILQGGANTYNYVGVESELLSVKTVVEEYQSMAQQPEIRKAVDIIVNDVVTCEEDETPVTVNLDKVEGISDTVKESITECFKEVMHLMDFDNTAYQKIRKWYVDGRQAYHVIVDPTNKKGGIKKLVMLDSRCIRPVYIVEKAMREGGIEAIESVTLKYYYNPNYNRNQFTGQSGTSQNFQPSQQELVFDDESIVYIDSGEEPLANGIVPGLLNPAIRPLNNLVTTEDATVIYAITRAPEKRAFYLDVGTLGKKSAEEYMTMMMGKFKNRNAYDRTTGKITGNAHLMGIAEDYWLPRREGQNATEIATVGGGNQLGEMDHVNYFREKLYDALMIPKSRLQEEGSINIGGSNLAEITQEELRFSKFCAGLRRRYSHFFMEFLRRQLILKGVTDEKDWNEKIKPFIKFEFTSDSYIREQQENAILNDRLASLNTVEPFVGSIFSIDYVMRNVLRMSDEEVKEQQAKIAEEKKKGLYPKVQADETGNYSGSDVSPLKFKPETLPFSGSTDDSI.

Residues 526–560 form a disordered region; that stretch reads KVQADETGNYSGSDVSPLKFKPETLPFSGSTDDSI.

Belongs to the Tevenvirinae portal protein family. In terms of assembly, homododecamer. Interacts with the large terminase subunit. Interacts with the major capsid protein. Interacts with the capsid vertex protein.

Its subcellular location is the virion. Its function is as follows. Forms the portal vertex of the capsid. This portal plays critical roles in head assembly, genome packaging, neck/tail attachment, and genome ejection. The portal protein multimerizes as a single ring-shaped homododecamer arranged around a central channel. Binds to the terminase subunits to form the packaging machine. This is Portal protein from Salmonella typhi.